A 576-amino-acid polypeptide reads, in one-letter code: Proline--tRNA ligase (576 aa).

Belongs to the class-II aminoacyl-tRNA synthetase family. ProS type 1 subfamily. Homodimer.

The protein resides in the cytoplasm. It catalyses the reaction tRNA(Pro) + L-proline + ATP = L-prolyl-tRNA(Pro) + AMP + diphosphate. Functionally, catalyzes the attachment of proline to tRNA(Pro) in a two-step reaction: proline is first activated by ATP to form Pro-AMP and then transferred to the acceptor end of tRNA(Pro). As ProRS can inadvertently accommodate and process non-cognate amino acids such as alanine and cysteine, to avoid such errors it has two additional distinct editing activities against alanine. One activity is designated as 'pretransfer' editing and involves the tRNA(Pro)-independent hydrolysis of activated Ala-AMP. The other activity is designated 'posttransfer' editing and involves deacylation of mischarged Ala-tRNA(Pro). The misacylated Cys-tRNA(Pro) is not edited by ProRS. This is Proline--tRNA ligase from Dechloromonas aromatica (strain RCB).